We begin with the raw amino-acid sequence, 415 residues long: Homoserine O-succinyltransferase (415 aa).

The AB hydrolase-1 domain occupies 69-383 (NAVLVCHALN…PHGHDAFLLD (315 aa)). Ser175 serves as the catalytic Nucleophile. Arg245 lines the substrate pocket. Catalysis depends on residues Asp344 and His377. Asp378 contacts substrate.

It belongs to the AB hydrolase superfamily. MetX family. Homodimer.

It is found in the cytoplasm. It carries out the reaction L-homoserine + succinyl-CoA = O-succinyl-L-homoserine + CoA. The protein operates within amino-acid biosynthesis; L-methionine biosynthesis via de novo pathway; O-succinyl-L-homoserine from L-homoserine: step 1/1. In terms of biological role, transfers a succinyl group from succinyl-CoA to L-homoserine, forming succinyl-L-homoserine. This is Homoserine O-succinyltransferase from Bordetella parapertussis (strain 12822 / ATCC BAA-587 / NCTC 13253).